The chain runs to 417 residues: Protein FAM181B (417 aa).

The interval 104-147 (CSGLMGTAPPRPASPSAADAPAKRPPGAPTVATPAHCKAAPRRE) is disordered.

Belongs to the FAM181 family.

The chain is Protein FAM181B (Fam181b) from Mus musculus (Mouse).